We begin with the raw amino-acid sequence, 390 residues long: RNA polymerase sigma factor SigA (390 aa).

Residues 48–57 (FLEPQTDEDD) show a composition bias toward acidic residues. Residues 48–75 (FLEPQTDEDDAKSGKAAKSRRRTQSKKK) form a disordered region. The segment covering 62-75 (KAAKSRRRTQSKKK) has biased composition (basic residues). Positions 158 to 228 (MVQSNLRLVV…TRAIADQSRT (71 aa)) are sigma-70 factor domain-2. Residues 182-185 (DLIQ) carry the Interaction with polymerase core subunit RpoC motif. A sigma-70 factor domain-3 region spans residues 237 to 312 (ETISRIKKTT…ESDGETPEDQ (76 aa)). Positions 325 to 378 (VLDSLSPRERDVLRLRYGLDDGRMKTLEEIGQIFNVTRERIRQIEAKALRKLRH) are sigma-70 factor domain-4. The segment at residues 351–370 (LEEIGQIFNVTRERIRQIEA) is a DNA-binding region (H-T-H motif).

This sequence belongs to the sigma-70 factor family. RpoD/SigA subfamily. Interacts transiently with the RNA polymerase catalytic core.

The protein localises to the cytoplasm. In terms of biological role, sigma factors are initiation factors that promote the attachment of RNA polymerase to specific initiation sites and are then released. This sigma factor is the primary sigma factor during exponential growth. The polypeptide is RNA polymerase sigma factor SigA (Nostoc sp. (strain PCC 7120 / SAG 25.82 / UTEX 2576)).